The sequence spans 231 residues: Transcriptional regulatory protein KdpE (231 aa).

The region spanning 4–117 is the Response regulatory domain; it reads KILIIEDDHA…ELRARIRVIE (114 aa). A 4-aspartylphosphate modification is found at Asp-53. The segment at residues 127–227 is a DNA-binding region (ompR/PhoB-type); the sequence is NIVFTNGLLS…HPRIGYQMLQ (101 aa).

In terms of processing, phosphorylated by KdpD. Phosphorylation is required for transcriptional activity.

In terms of biological role, member of the two-component regulatory system KdpD/KdpE that regulates the transcription of a series of virulence factors through sensing external K(+) concentrations. Also regulates capsular polysaccharide synthesis. Upon phosphorylation by KpdD, functions as a transcriptional regulator by direct binding to promoter regions of target genes including spa, hla, aur and geh. Represses the transcription of kdpFABC operon. In Staphylococcus aureus (strain NCTC 8325 / PS 47), this protein is Transcriptional regulatory protein KdpE.